Here is an 81-residue protein sequence, read N- to C-terminus: ATP synthase subunit c, chloroplastic (81 aa).

2 helical membrane passes run 3-23 (PLISAASVIAAGLAVGLASIG) and 53-73 (LLLSLAFMEALTIYGLVVALA).

It belongs to the ATPase C chain family. As to quaternary structure, F-type ATPases have 2 components, F(1) - the catalytic core - and F(0) - the membrane proton channel. F(1) has five subunits: alpha(3), beta(3), gamma(1), delta(1), epsilon(1). F(0) has four main subunits: a(1), b(1), b'(1) and c(10-14). The alpha and beta chains form an alternating ring which encloses part of the gamma chain. F(1) is attached to F(0) by a central stalk formed by the gamma and epsilon chains, while a peripheral stalk is formed by the delta, b and b' chains.

The protein resides in the plastid. It localises to the chloroplast thylakoid membrane. In terms of biological role, f(1)F(0) ATP synthase produces ATP from ADP in the presence of a proton or sodium gradient. F-type ATPases consist of two structural domains, F(1) containing the extramembraneous catalytic core and F(0) containing the membrane proton channel, linked together by a central stalk and a peripheral stalk. During catalysis, ATP synthesis in the catalytic domain of F(1) is coupled via a rotary mechanism of the central stalk subunits to proton translocation. Its function is as follows. Key component of the F(0) channel; it plays a direct role in translocation across the membrane. A homomeric c-ring of between 10-14 subunits forms the central stalk rotor element with the F(1) delta and epsilon subunits. In Angiopteris evecta (Mule's foot fern), this protein is ATP synthase subunit c, chloroplastic.